A 189-amino-acid chain; its full sequence is Probable pericyclase scpY (189 aa).

The protein belongs to the pericyclase pydY family.

The protein operates within mycotoxin biosynthesis. Probable pericyclase; part of the gene scp cluster that mediates the biosynthesis of a hirsutellone-like compound that has still to be identified. The chain is Probable pericyclase scpY from Mollisia scopiformis (Conifer needle endophyte fungus).